We begin with the raw amino-acid sequence, 152 residues long: 3-hydroxyacyl-[acyl-carrier-protein] dehydratase FabZ (152 aa).

Residue H57 is part of the active site.

This sequence belongs to the thioester dehydratase family. FabZ subfamily.

The protein resides in the cytoplasm. The enzyme catalyses a (3R)-hydroxyacyl-[ACP] = a (2E)-enoyl-[ACP] + H2O. Functionally, involved in unsaturated fatty acids biosynthesis. Catalyzes the dehydration of short chain beta-hydroxyacyl-ACPs and long chain saturated and unsaturated beta-hydroxyacyl-ACPs. The protein is 3-hydroxyacyl-[acyl-carrier-protein] dehydratase FabZ of Pasteurella multocida (strain Pm70).